A 384-amino-acid chain; its full sequence is DNA polymerase IV (384 aa).

Positions 5–182 constitute a UmuC domain; the sequence is IIHVDMDAFF…LPVTKVHGIG (178 aa). Mg(2+) is bound by residues D9, M10, and D103. The active site involves E104.

The protein belongs to the DNA polymerase type-Y family. Monomer. It depends on Mg(2+) as a cofactor.

It localises to the cytoplasm. The catalysed reaction is DNA(n) + a 2'-deoxyribonucleoside 5'-triphosphate = DNA(n+1) + diphosphate. Functionally, poorly processive, error-prone DNA polymerase involved in translesion repair and untargeted mutagenesis. Copies undamaged DNA at stalled replication forks, which arise in vivo from mismatched or misaligned primer ends. These misaligned primers can be extended by PolIV. Exhibits no 3'-5' exonuclease (proofreading) activity. Involved in translesional synthesis. Primer extension fidelity in vitro is temperature-dependent. Inserts a correct base opposite templating bases at 70 degrees Celsius, but at 37 degrees Celsius in addition to correct base pairing, base transitions, transversions and frameshifts can occur. Preferably forms erroneous base pairs C:T. Bypasses 8-oxo-dG oxidative damage by incorporating dATP or dCTP opposite of the damaged DNA template site at both temperatures in vitro. The protein is DNA polymerase IV of Caldanaerobacter subterraneus subsp. tengcongensis (strain DSM 15242 / JCM 11007 / NBRC 100824 / MB4) (Thermoanaerobacter tengcongensis).